A 675-amino-acid polypeptide reads, in one-letter code: Transmembrane protein 232 (675 aa).

The chain crosses the membrane as a helical span at residues 163 to 183 (LVKIGYLIFLRLFVFFLHGHL). The stretch at 598 to 634 (WQKDMEARKREEEAYKAQNQKDKEEKEKIHFQEIMKQ) forms a coiled coil. The interval 605–624 (RKREEEAYKAQNQKDKEEKE) is disordered.

In terms of tissue distribution, high expression in the testis and weak expression levels in the spleen, liver, brain, uterus, lung, epididymis and kidney. Not detected in the heart or ovary.

Its subcellular location is the membrane. In terms of biological role, plays a critical role for male fertility and sperm motility by regulating sperm cytoplasm removal and maintaining axoneme integrity. In Mus musculus (Mouse), this protein is Transmembrane protein 232 (Tmem232).